We begin with the raw amino-acid sequence, 184 residues long: MVRYSLDPENPTKSCKSRGSNLRVHFKNTRETAQAIKGMHIRKATKYLKDVTLQKQCVPFRRYNGGVGRCAQAKQWGWTQGRWPKKSAEFLLHMLKNAESNAELKGLDVDSLVIEHIQVNKAPKMRRRTYRAHGRINPYMSSPCHIEMILTEKEQIVPKPEEEVAQKKKISQKKLKKQKLMARE.

Residues 160-184 (PEEEVAQKKKISQKKLKKQKLMARE) form a disordered region. A compositionally biased stretch (basic residues) spans 167–184 (KKKISQKKLKKQKLMARE).

The protein belongs to the universal ribosomal protein uL22 family. Component of the large ribosomal subunit. Expressed in pancreas, lung, colon, cystic duct, gall bladder, kidney and liver. Expressed at high levels in the well differentiated pancreatic tumor cell lines HPAF, COLO 357 and Capan-1, the moderately differentiated pancreatic tumor cell lines T3M-4, AsPc-1 and BxPc-3, the poorly differentiated pancreatic tumor cell line MIA PaCa-2, and the pancreatic tumor cell lines of undefined differentiation status such as SW979. Expressed at lower levels in the poorly differentiated pancreatic tumor cell lines HCG-25 and PANC-1.

The protein localises to the cytoplasm. Its function is as follows. Component of the large ribosomal subunit. The ribosome is a large ribonucleoprotein complex responsible for the synthesis of proteins in the cell. This is Large ribosomal subunit protein uL22 (RPL17) from Homo sapiens (Human).